The primary structure comprises 888 residues: Alanine--tRNA ligase (888 aa).

Zn(2+) contacts are provided by histidine 573, histidine 577, cysteine 676, and histidine 680.

This sequence belongs to the class-II aminoacyl-tRNA synthetase family. Zn(2+) serves as cofactor.

The protein resides in the cytoplasm. It carries out the reaction tRNA(Ala) + L-alanine + ATP = L-alanyl-tRNA(Ala) + AMP + diphosphate. Functionally, catalyzes the attachment of alanine to tRNA(Ala) in a two-step reaction: alanine is first activated by ATP to form Ala-AMP and then transferred to the acceptor end of tRNA(Ala). Also edits incorrectly charged Ser-tRNA(Ala) and Gly-tRNA(Ala) via its editing domain. This is Alanine--tRNA ligase from Corynebacterium glutamicum (strain R).